We begin with the raw amino-acid sequence, 319 residues long: MSDYQVLLYYKYTTIDDPETFAKEHLAACKEMELKGRILVASEGINGTVSGTVEATNKYMDYMANDARFADMVFKIDAADSHAFKKMHVRPRAEIVSLSLEEDVNPLEVTGTYLEPTEFREALLDEDTVILDARNDYEFDIGHFRGAVRPDIQNFRELPGWIEENRDQLADKKIVTYCTGGIRCEKFSGWLKTAGFEDVSQLHGGIATYGKNEETKGELWDGQMYVFDERIAVPINQVNPTIVGKDYFDGTPCERYINCANPYCNKQILASIENEEKYLRSCSHECRVHPANLYTKELSKEEFTERLQAISETSPEMVQ.

A Rhodanese domain is found at Leu-124–Glu-218. Cys-178 acts as the Cysteine persulfide intermediate in catalysis.

Belongs to the TrhO family.

The catalysed reaction is uridine(34) in tRNA + AH2 + O2 = 5-hydroxyuridine(34) in tRNA + A + H2O. Functionally, catalyzes oxygen-dependent 5-hydroxyuridine (ho5U) modification at position 34 in tRNAs. This Listeria welshimeri serovar 6b (strain ATCC 35897 / DSM 20650 / CCUG 15529 / CIP 8149 / NCTC 11857 / SLCC 5334 / V8) protein is tRNA uridine(34) hydroxylase.